Consider the following 158-residue polypeptide: Scytalone dehydratase-like protein CPUR_05428 (158 aa).

Residues Tyr24 and Tyr44 each coordinate substrate. Active-site residues include His79 and His104.

This sequence belongs to the scytalone dehydratase family.

It functions in the pathway pigment biosynthesis. Functionally, scytalone dehydratase-like protein; part of the ergochrome gene cluster responsible for the typical purple-black color of the ergot sclerotia. The ergochrome gene cluster produces several ergot pigments including the yellow ergochrome secalonic acid and its derivatives, as well as the red anthraquinones endocrocin and clavorubin. The pathway begins with the synthesis of atrochrysone thioester by the polyketide synthase (PKS) CPUR_05437. The atrochrysone carboxyl ACP thioesterase CPUR_05436 then breaks the thioester bond and releases the atrochrysone carboxylic acid from CPUR_05437. The atrochrysone carboxylic acid is then converted to atrochrysone which is further transformed into emodin anthrone. The next step is performed by the anthrone oxygenase CPUR_05434 that catalyzes the oxidation of emodinanthrone to emodin. Emodin is further modified to yield monodictyphenone via several steps involving CPUR_05427, CPUR_05428, CPUR_05429 and CPUR_05430. The short chain dehydrogenase/reductase CPUR_05418 then catalyzes the C-5 ketoreduction to give the xanthone skeleton of the monomeric units. Ergochromes formation requires further dimerization steps of different xanthone units, probably catalyzed by the cytochrome P450 monooxygenase CPUR_05419. CPUR_05425, CPUR_05426 and CPUR_05431 are unique to Claviceps, thus it is likely that they are involved in further modification of xanthone units or in their dimerization. The yellow ergochromes and the red anthraquinone pigments endocrocin and clavorubin are products from the same PKS derived precursors and the latter are likely shunt products in the pathway of xanthone biosynthesis. It is proposed that atrochrysone carboxylic acid released from the PKS CPUR_05437 can also be converted to endocrocin anthrone which is further oxidized into endocrocin by CPUR_05435. Endocrocin could be then modified to clavorubin, possibly by CPUR_05423 and CPUR_05431. Clavorubin is the principal anthraquinone metabolite produced by the cluster with a much higher yield compared to endocrocin. This is Scytalone dehydratase-like protein CPUR_05428 from Claviceps purpurea (strain 20.1) (Ergot fungus).